The chain runs to 39 residues: Photosystem II reaction center protein J (39 aa).

The helical transmembrane segment at Leu-9–Tyr-29 threads the bilayer.

It belongs to the PsbJ family. In terms of assembly, PSII is composed of 1 copy each of membrane proteins PsbA, PsbB, PsbC, PsbD, PsbE, PsbF, PsbH, PsbI, PsbJ, PsbK, PsbL, PsbM, PsbT, PsbX, PsbY, PsbZ, Psb30/Ycf12, at least 3 peripheral proteins of the oxygen-evolving complex and a large number of cofactors. It forms dimeric complexes.

Its subcellular location is the plastid. It is found in the chloroplast thylakoid membrane. One of the components of the core complex of photosystem II (PSII). PSII is a light-driven water:plastoquinone oxidoreductase that uses light energy to abstract electrons from H(2)O, generating O(2) and a proton gradient subsequently used for ATP formation. It consists of a core antenna complex that captures photons, and an electron transfer chain that converts photonic excitation into a charge separation. The polypeptide is Photosystem II reaction center protein J (Gracilaria tenuistipitata var. liui (Red alga)).